Here is a 268-residue protein sequence, read N- to C-terminus: Undecaprenyl-diphosphatase (268 aa).

A run of 8 helical transmembrane segments spans residues 3–23, 46–66, 84–104, 107–127, 144–164, 184–204, 218–238, and 248–268; these read VFNLLEAAFLGLIEGLTEFIP, FEVLIQLGAILAILTVYSAKL, FGILVAFLPAAVIGALAHGFI, VLFETPMLVCIMLIIGGFILL, YPLPMCLAIGFIQCLAMIPGV, AAEFSFFLAMPTMAGAFAYDL, LIGVGFVMAFISGVFVVRYLL, and LFGWWRLIVGSVGLAALLVWG.

Belongs to the UppP family.

Its subcellular location is the cell inner membrane. It carries out the reaction di-trans,octa-cis-undecaprenyl diphosphate + H2O = di-trans,octa-cis-undecaprenyl phosphate + phosphate + H(+). Catalyzes the dephosphorylation of undecaprenyl diphosphate (UPP). Confers resistance to bacitracin. This is Undecaprenyl-diphosphatase from Brucella anthropi (strain ATCC 49188 / DSM 6882 / CCUG 24695 / JCM 21032 / LMG 3331 / NBRC 15819 / NCTC 12168 / Alc 37) (Ochrobactrum anthropi).